The chain runs to 559 residues: Arginine--tRNA ligase (559 aa).

The 'HIGH' region motif lies at 116 to 126; the sequence is ANPNGPLHVGH.

The protein belongs to the class-I aminoacyl-tRNA synthetase family.

The protein resides in the cytoplasm. The enzyme catalyses tRNA(Arg) + L-arginine + ATP = L-arginyl-tRNA(Arg) + AMP + diphosphate. In Methanosphaerula palustris (strain ATCC BAA-1556 / DSM 19958 / E1-9c), this protein is Arginine--tRNA ligase.